The sequence spans 151 residues: Methylglyoxal synthase (151 aa).

Positions 6 to 151 (RVMPAHKHIA…DYDAYLAERV (146 aa)) constitute an MGS-like domain. Residues histidine 19, lysine 23, 45–48 (TGTT), and 65–66 (SG) each bind substrate. The active-site Proton donor/acceptor is aspartate 71. Histidine 98 lines the substrate pocket.

It belongs to the methylglyoxal synthase family.

It carries out the reaction dihydroxyacetone phosphate = methylglyoxal + phosphate. In terms of biological role, catalyzes the formation of methylglyoxal from dihydroxyacetone phosphate. The polypeptide is Methylglyoxal synthase (Aliivibrio fischeri (strain MJ11) (Vibrio fischeri)).